Reading from the N-terminus, the 292-residue chain is MTLAKVFSQKLRELGISSIYIGHERPSLQSLAIKMLLKNYGLVEERREGMLITQDHGIKLISGKGTETSRYTFRKGGKKVSIHLPEYPKMVIDLGLFEFLNEEEKEKTLLQVDLCLSVIRKFLWDGNLTVVGKADYVLGRANIVQSLSLSDEDNPVILDPYGDVVATDQILRDHNVFVIGGIVDKGRRLDRATERLALSRGYSFPRVKIQLRGSIIGVPDEINKILEIILRVKELDQSLEEAIISLQSKSDKISRLLHDVQLYGMEVLEEEARWLRADDKVIEIVRSRLGKN.

Positions 72–253 (TFRKGGKKVS…ISLQSKSDKI (182 aa)) constitute an SAM-dependent MTase TRM10-type domain.

It belongs to the class IV-like SAM-binding methyltransferase superfamily. TRM10 family.

It localises to the cytoplasm. The enzyme catalyses adenosine(9) in tRNA + S-adenosyl-L-methionine = N(1)-methyladenosine(9) in tRNA + S-adenosyl-L-homocysteine + H(+). Its function is as follows. Catalyzes the S-adenosyl-L-methionine-dependent formation of N(1)-methyladenine at position 9 (m1A9) in tRNA. The polypeptide is tRNA (adenine(9)-N1)-methyltransferase (Sulfolobus acidocaldarius (strain ATCC 33909 / DSM 639 / JCM 8929 / NBRC 15157 / NCIMB 11770)).